The primary structure comprises 40 residues: Photosystem II reaction center protein J (40 aa).

A helical membrane pass occupies residues 8–28 (IPLWIIGTVAGILVIGLVGIF).

Belongs to the PsbJ family. In terms of assembly, PSII is composed of 1 copy each of membrane proteins PsbA, PsbB, PsbC, PsbD, PsbE, PsbF, PsbH, PsbI, PsbJ, PsbK, PsbL, PsbM, PsbT, PsbX, PsbY, PsbZ, Psb30/Ycf12, at least 3 peripheral proteins of the oxygen-evolving complex and a large number of cofactors. It forms dimeric complexes.

Its subcellular location is the plastid. The protein localises to the chloroplast thylakoid membrane. Functionally, one of the components of the core complex of photosystem II (PSII). PSII is a light-driven water:plastoquinone oxidoreductase that uses light energy to abstract electrons from H(2)O, generating O(2) and a proton gradient subsequently used for ATP formation. It consists of a core antenna complex that captures photons, and an electron transfer chain that converts photonic excitation into a charge separation. This is Photosystem II reaction center protein J from Spinacia oleracea (Spinach).